The sequence spans 306 residues: tRNA-cytidine(32) 2-sulfurtransferase (306 aa).

The short motif at 49-54 is the PP-loop motif element; sequence SGGKDS. [4Fe-4S] cluster-binding residues include Cys-124, Cys-127, and Cys-215.

Belongs to the TtcA family. In terms of assembly, homodimer. Mg(2+) serves as cofactor. [4Fe-4S] cluster is required as a cofactor.

The protein resides in the cytoplasm. The catalysed reaction is cytidine(32) in tRNA + S-sulfanyl-L-cysteinyl-[cysteine desulfurase] + AH2 + ATP = 2-thiocytidine(32) in tRNA + L-cysteinyl-[cysteine desulfurase] + A + AMP + diphosphate + H(+). It participates in tRNA modification. In terms of biological role, catalyzes the ATP-dependent 2-thiolation of cytidine in position 32 of tRNA, to form 2-thiocytidine (s(2)C32). The sulfur atoms are provided by the cysteine/cysteine desulfurase (IscS) system. This Azoarcus sp. (strain BH72) protein is tRNA-cytidine(32) 2-sulfurtransferase.